Consider the following 262-residue polypeptide: Short-chain Z-isoprenyl diphosphate synthase (262 aa).

Residue D40 is part of the active site. D40 is a Mg(2+) binding site. Substrate-binding positions include 41 to 44 (GNRR), W45, and 86 to 88 (STE). Catalysis depends on N89, which acts as the Proton acceptor. Residues R92, R211, and 217–219 (RLS) each bind substrate. Residue E230 coordinates Mg(2+).

The protein belongs to the UPP synthase family. Z-FPP synthase subfamily. Requires Mg(2+) as cofactor.

The enzyme catalyses isopentenyl diphosphate + (2E)-geranyl diphosphate = (2Z,6E)-farnesyl diphosphate + diphosphate. It functions in the pathway phospholipid metabolism; decaprenyl phosphate biosynthesis. Functionally, generates Z-farnesyl diphosphate (Z-FPP) from isopentenyl pyrophosphate (IPP). Z-FPP is the precursor of decaprenyl diphosphate, which has a central role in the biosynthesis of the mycobacterial cell wall. The chain is Short-chain Z-isoprenyl diphosphate synthase from Mycobacterium bovis (strain ATCC BAA-935 / AF2122/97).